The primary structure comprises 643 residues: Mitochondrial Rho GTPase 2 (643 aa).

The Cytoplasmic portion of the chain corresponds to 1–611 (MMLGGKSSAG…SGRRSRNIRQ (611 aa)). The Miro 1 domain occupies 12–179 (RTSLRVAVAG…FYFASKAVLH (168 aa)). 2 EF-hand domains span residues 195-230 (RLRRAVQRIFNLCDHDLDGALNDAELNDFQVNCFGA) and 315-350 (EAMDFLSGIFQLYDLDNDGALQPAELDDLFQTAPDS). Ca(2+) contacts are provided by aspartate 208, aspartate 210, aspartate 212, glutamate 219, aspartate 328, aspartate 330, aspartate 332, and glutamate 339. The region spanning 423 to 592 (RNVFQCFVFG…FSRIVSTAEN (170 aa)) is the Miro 2 domain. A helical transmembrane segment spans residues 612–632 (LVNSSLLFVSVGTAVGFAGLA). Residues 633 to 643 (AYRAYSARKNA) lie on the Mitochondrial intermembrane side of the membrane.

Belongs to the mitochondrial Rho GTPase family. In terms of tissue distribution, expressed roots, rosette and cauline leaves, stems, flowers and siliques.

Its subcellular location is the mitochondrion outer membrane. Activated by calcium. Functionally, calcium-binding mitochondrial GTPase involved in calcium signaling during salt stress response. May play a role in the progression of embryonic cell division, development of haploid male and female gametes, and pollen tube growth. The sequence is that of Mitochondrial Rho GTPase 2 from Arabidopsis thaliana (Mouse-ear cress).